We begin with the raw amino-acid sequence, 271 residues long: Aminoglycoside 3'-phosphotransferase (271 aa).

Catalysis depends on aspartate 198, which acts as the Proton acceptor.

The protein belongs to the aminoglycoside phosphotransferase family.

The catalysed reaction is kanamycin A + ATP = kanamycin 3'-phosphate + ADP + H(+). Its function is as follows. Resistance to kanamycin and structurally-related aminoglycosides, including amikacin. The polypeptide is Aminoglycoside 3'-phosphotransferase (aphA1) (Escherichia coli).